The chain runs to 809 residues: Sucrose synthase 4 (809 aa).

Residues 275–753 (MIFNVVVVSP…GLQRIYEKYT (479 aa)) are GT-B glycosyltransferase.

The protein belongs to the glycosyltransferase 1 family. Plant sucrose synthase subfamily. Predominantly expressed in the leaf tissues and in caryopses.

It carries out the reaction an NDP-alpha-D-glucose + D-fructose = a ribonucleoside 5'-diphosphate + sucrose + H(+). Its function is as follows. Sucrose-cleaving enzyme that provides UDP-glucose and fructose for various metabolic pathways. The chain is Sucrose synthase 4 (SUS4) from Oryza sativa subsp. japonica (Rice).